A 307-amino-acid chain; its full sequence is Ornithine carbamoyltransferase (307 aa).

Residues 56 to 59 (STRT), Gln83, Arg107, and 134 to 137 (HPCQ) each bind carbamoyl phosphate. L-ornithine-binding positions include Asn165, Asp223, and 227 to 228 (SM). Carbamoyl phosphate-binding positions include 263 to 264 (CL) and Arg291.

It belongs to the aspartate/ornithine carbamoyltransferase superfamily. OTCase family.

It is found in the cytoplasm. It catalyses the reaction carbamoyl phosphate + L-ornithine = L-citrulline + phosphate + H(+). Its pathway is amino-acid biosynthesis; L-arginine biosynthesis; L-arginine from L-ornithine and carbamoyl phosphate: step 1/3. Its function is as follows. Reversibly catalyzes the transfer of the carbamoyl group from carbamoyl phosphate (CP) to the N(epsilon) atom of ornithine (ORN) to produce L-citrulline. This Cupriavidus pinatubonensis (strain JMP 134 / LMG 1197) (Cupriavidus necator (strain JMP 134)) protein is Ornithine carbamoyltransferase.